The primary structure comprises 428 residues: 4-hydroxy-3-methylbut-2-en-1-yl diphosphate synthase (flavodoxin) (428 aa).

The [4Fe-4S] cluster site is built by Cys300, Cys303, Cys346, and Glu353.

The protein belongs to the IspG family. [4Fe-4S] cluster serves as cofactor.

It catalyses the reaction (2E)-4-hydroxy-3-methylbut-2-enyl diphosphate + oxidized [flavodoxin] + H2O + 2 H(+) = 2-C-methyl-D-erythritol 2,4-cyclic diphosphate + reduced [flavodoxin]. It participates in isoprenoid biosynthesis; isopentenyl diphosphate biosynthesis via DXP pathway; isopentenyl diphosphate from 1-deoxy-D-xylulose 5-phosphate: step 5/6. Its function is as follows. Converts 2C-methyl-D-erythritol 2,4-cyclodiphosphate (ME-2,4cPP) into 1-hydroxy-2-methyl-2-(E)-butenyl 4-diphosphate. The polypeptide is 4-hydroxy-3-methylbut-2-en-1-yl diphosphate synthase (flavodoxin) (Methylobacillus flagellatus (strain ATCC 51484 / DSM 6875 / VKM B-1610 / KT)).